A 972-amino-acid chain; its full sequence is Optomotor-blind protein (972 aa).

Disordered stretches follow at residues 44-248 (SLLT…YFPA), 263-286 (PGLYPGGGLRFPPHHPGAHPHAHH), 508-563 (AKGF…HPHA), 645-676 (ADVERDGSDSSCSESVGGSTGGAFRPTSTGSP), 805-889 (AVTP…PSEL), and 918-972 (EEAA…GTDQ). Composition is skewed to low complexity over residues 49 to 80 (GSNNNNSGNTNSGNNNSNSNNNTNSNTNNTNN) and 97 to 142 (SNHS…NNTS). Pro residues predominate over residues 155–176 (PPSPAGTPPPTIVGLPPIPPPN). 2 stretches are compositionally biased toward low complexity: residues 177–193 (NNSSSSSSNNSASAAAH) and 201–212 (AHHSPSTGAAAP). The span at 213–225 (PAGPTGLPPPTPP) shows a compositional bias: pro residues. Residues 226–237 (HHLQQQQQQQQH) are compositionally biased toward low complexity. Residues 274-286 (PPHHPGAHPHAHH) show a composition bias toward basic residues. Residues 332-513 (LEGKDLWEKF…NNPFAKGFRD (182 aa)) constitute a DNA-binding region (T-box). The span at 818 to 831 (PPGGGGGGLGGGVV) shows a compositional bias: gly residues. The span at 835-851 (PRSLSSSPRPRPASHSP) shows a compositional bias: low complexity. Phosphoserine is present on serine 887. Basic residues predominate over residues 952–963 (HPHHQTHLHSHH).

As to expression, in third-instar larvae, expressed in the brain region that will develop into optic lobes and more weakly in the thoracic part of the ventral ganglion.

It localises to the nucleus. Essential protein that may function as a transcription regulator. Vital for pupal development. Required for proper development of the optic lobes and wings, and abdominal pigmentation. The protein is Optomotor-blind protein (bi) of Drosophila melanogaster (Fruit fly).